The primary structure comprises 102 residues: Envelope protein US9 (102 aa).

Topologically, residues 1–75 (MAGQNTMEGE…KIYHRKKFCY (75 aa)) are intravirion. The Di-leucine internalization motif signature appears at 14 to 15 (LL). Residues 41–55 (EKCYYSDSENETADE) are acidic. A phosphoserine; by host CK2 mark is found at Ser46 and Ser48. A helical; Signal-anchor for type II membrane protein membrane pass occupies residues 76-96 (ITLIIVFVFAMTGAAFALGYI). Residues 97-102 (TSQFVG) are Virion surface-facing.

Belongs to the alphaherpesvirinae envelope protein US9 family. Phosphorylated on serines within the acidic cluster, possibly by host CK2. Phosphorylation determines whether endocytosed viral US9 traffics to the trans-Golgi network or recycles to the cell membrane.

Its subcellular location is the virion membrane. The protein resides in the host Golgi apparatus membrane. It is found in the host Golgi apparatus. The protein localises to the host trans-Golgi network. It localises to the host cell membrane. In terms of biological role, essential for the anterograde spread of the infection throughout the host nervous system. Together with the gE/gI heterodimer, US9 is involved in the sorting and transport of viral structural components toward axon tips. The chain is Envelope protein US9 from Varicella-zoster virus (strain Dumas) (HHV-3).